We begin with the raw amino-acid sequence, 398 residues long: Ethanolaminephosphotransferase 1 (398 aa).

N-acetylalanine is present on A2. 10 helical membrane-spanning segments follow: residues 47 to 69 (WLAP…LLLT), 84 to 103 (HVPD…AYTL), 123 to 145 (LFDH…SIFG), 150 to 172 (GVSV…LSHW), 179 to 201 (VLFL…IVTA), 221 to 243 (LFTA…LNFF), 256 to 278 (VYEA…VWIL), 291 to 310 (IFYF…LIVC), 319 to 341 (TLNW…AATS), and 345 to 367 (SALL…VQVV). A non-standard amino acid (selenocysteine) is located at residue U388.

Belongs to the CDP-alcohol phosphatidyltransferase class-I family. It depends on Mg(2+) as a cofactor. The cofactor is Mn(2+).

The protein resides in the endoplasmic reticulum membrane. The catalysed reaction is CDP-ethanolamine + a 1,2-diacyl-sn-glycerol = a 1,2-diacyl-sn-glycero-3-phosphoethanolamine + CMP + H(+). The enzyme catalyses 1-O-alkyl-2-acyl-sn-glycerol + CDP-ethanolamine = a 1-O-alkyl-2-acyl-sn-glycero-3-phosphoethanolamine + CMP + H(+). It functions in the pathway phospholipid metabolism; phosphatidylethanolamine biosynthesis; phosphatidylethanolamine from ethanolamine: step 3/3. Its function is as follows. Ethanolaminephosphotransferase that catalyzes the transfer of phosphoethanolamine (PE) from CDP-ethanolamine to lipid acceptors, the final step in the synthesis of PE via the 'Kennedy' pathway. PE is the second most abundant phospholipid of membranes in mammals and is involved in various membrane-related cellular processes. The enzyme is critical for the synthesis of several PE species and also catalyzes the synthesis of plasmanyl-PE, a lipid required for proper myelination and neurodevelopment, from 1-alkyl-2-acylglycerol. The protein is Ethanolaminephosphotransferase 1 of Mus musculus (Mouse).